The chain runs to 455 residues: P2X purinoceptor 5 (455 aa).

Topologically, residues 1–30 (MGQAAWKGFVLSLFDYKTAKFVVAKSKKVG) are cytoplasmic. Residues 31–50 (LLYRVLQLTILLYLLIWVFL) form a helical membrane-spanning segment. Residues 51 to 339 (IKKSYQDIDT…KFSIIPTVIN (289 aa)) are Extracellular-facing. 69-71 (KVK) is a binding site for ATP. An N-linked (GlcNAc...) asparagine glycan is attached at N77. 3 disulfides stabilise this stretch: C118–C169, C129–C152, and C135–C163. Residue N157 is glycosylated (N-linked (GlcNAc...) asparagine). Residue T189 participates in ATP binding. Residue N202 is glycosylated (N-linked (GlcNAc...) asparagine). 2 disulfide bridges follow: C220-C229 and C263-C272. ATP-binding positions include 294–296 (NFR) and K314. The helical transmembrane segment at 340 to 362 (IGSGLALMGAGAFFCDLVLIYLI) threads the bilayer. At 363 to 455 (RKSEFYRDKK…PSQILQTVKT (93 aa)) the chain is on the cytoplasmic side.

It belongs to the P2X receptor family. Functional P2XRs are organized as homomeric and heteromeric trimers. Homotrimer. Forms heterotrimer with P2RX1. Expressed in a number of tissues, with highest levels detected in heart and kidney.

It localises to the cell membrane. The enzyme catalyses Na(+)(in) = Na(+)(out). It catalyses the reaction Ca(2+)(in) = Ca(2+)(out). It carries out the reaction chloride(in) = chloride(out). With respect to regulation, activated by ATP. Slowly desensitizing. Not activated by ATP agonist alpha/beta-methylene-ATP. Highly sensitive to the antagonists suramin and PPADS. In terms of biological role, ATP-gated nonselective transmembrane cation channel permeable to potassium, sodium and calcium. Unlike other P2RX receptors, the P2X5 receptor is also permeable to chloride. Acts as an important regulator of inflammatory-related bone loss and osteoclast multinucleation. The protein is P2X purinoceptor 5 of Mus musculus (Mouse).